A 211-amino-acid polypeptide reads, in one-letter code: Putative truncated flagellar export/assembly protein LafU (211 aa).

In terms of domain architecture, OmpA-like spans 58-176 (LRVLIKDDQN…RIEIMVLTKS (119 aa)).

The protein belongs to the MotB family.

This chain is Putative truncated flagellar export/assembly protein LafU, found in Escherichia coli (strain K12).